The primary structure comprises 3419 residues: Genome polyprotein (3419 aa).

Residues Met1–Asn25 are disordered. The Cytoplasmic segment spans residues Met1 to Arg104. The segment at Leu37 to Val72 is hydrophobic; homodimerization of capsid protein C. The propeptide at Gly105–Ala122 is ER anchor for capsid protein C, removed in mature form by serine protease NS3. The chain crosses the membrane as a helical span at residues Gly105–Ile125. At Thr126–Asn249 the chain is on the extracellular side. Asn192 carries N-linked (GlcNAc...) asparagine; by host glycosylation. The chain crosses the membrane as a helical span at residues Trp250 to Gly269. Topologically, residues Ser270–Gln274 are cytoplasmic. Residues Lys275–Ser290 form a helical membrane-spanning segment. Topologically, residues Ile291–Ser741 are extracellular. The cysteines at positions 293 and 320 are disulfide-linked. Lys328 is covalently cross-linked (Glycyl lysine isopeptide (Lys-Gly) (interchain with G-Cter in ubiquitin)). 7 cysteine pairs are disulfide-bonded: Cys350–Cys406, Cys350–Cys411, Cys364–Cys395, Cys382–Cys406, Cys382–Cys411, Cys476–Cys577, and Cys594–Cys625. The segment at Asp388 to Gly401 is fusion peptide. Lys567 participates in a covalent cross-link: Glycyl lysine isopeptide (Lys-Gly) (interchain with G-Cter in ubiquitin). A helical transmembrane segment spans residues Leu742–Leu763. Residues Asn764 to Ser769 lie on the Cytoplasmic side of the membrane. Residues Ile770–Ala790 traverse the membrane as a helical segment. Residues Asp791–Lys1173 are Lumenal-facing. 6 cysteine pairs are disulfide-bonded: Cys794-Cys805, Cys845-Cys933, Cys969-Cys1013, Cys1070-Cys1119, Cys1081-Cys1102, and Cys1103-Cys1106. 2 N-linked (GlcNAc...) asparagine; by host glycosylation sites follow: Asn920 and Asn997. A helical membrane pass occupies residues Ile1174–Ser1194. Residues Asp1195–Val1216 lie on the Cytoplasmic side of the membrane. Residues Ala1217 to Phe1237 traverse the membrane as a helical segment. Residues Arg1238–Asp1266 lie on the Lumenal side of the membrane. Residues Leu1267–Pro1287 form a helical membrane-spanning segment. Residues Arg1288 to Asn1291 are Cytoplasmic-facing. The helical transmembrane segment at Ile1292–Trp1312 threads the bilayer. Residues Arg1313 to Met1341 are Lumenal-facing. A helical membrane pass occupies residues Ala1342–Leu1362. Residues Thr1363–Ser1369 lie on the Cytoplasmic side of the membrane. A helical transmembrane segment spans residues Trp1370–Ala1390. Topologically, residues Lys1391–Asp1393 are lumenal. The chain crosses the membrane as a helical span at residues Ile1394 to Gly1414. Residues Lys1415–Lys1468 lie on the Cytoplasmic side of the membrane. The interacts with and activates NS3 protease stretch occupies residues Ile1421–Pro1460. A disordered region spans residues Gly1425–Asp1447. The helical intramembrane region spans Val1469–Trp1489. Residues Tyr1490–Thr2166 lie on the Lumenal side of the membrane. Positions Ser1499 to Cys1676 constitute a Peptidase S7 domain. Catalysis depends on charge relay system; for serine protease NS3 activity residues His1549, Asp1573, and Ser1633. The Helicase ATP-binding domain occupies Pro1679 to Glu1835. Residues Lys1683–Gln1686 form an important for RNA-binding region. Leu1692–Thr1699 serves as a coordination point for ATP. A DEAH box motif is present at residues Asp1783–His1786. A Helicase C-terminal domain is found at Pro1830–Glu2009. N6-acetyllysine; by host is present on Lys1887. A helical membrane pass occupies residues Leu2167 to Leu2187. At Met2188–Lys2191 the chain is on the lumenal side. The segment at residues Gly2192–Leu2212 is an intramembrane region (helical). Residues Ser2213–Glu2214 lie on the Cytoplasmic side of the membrane. A helical membrane pass occupies residues Ile2215–Ile2235. The Lumenal segment spans residues Pro2236–Ala2250. The helical intramembrane region spans Ile2251–Ala2265. The Lumenal segment spans residues Asn2266–Ser2303. The segment at residues Ala2304–Thr2324 is an intramembrane region (helical). At Thr2325–Gly2340 the chain is on the lumenal side. The helical transmembrane segment at Val2341–Leu2361 threads the bilayer. Topologically, residues Met2362–Pro2371 are cytoplasmic. The helical transmembrane segment at Leu2372–Leu2392 threads the bilayer. Topologically, residues Gln2393–Gln2437 are lumenal. The chain crosses the membrane as a helical span at residues Val2438 to Gly2458. Residues Glu2459–Leu3419 lie on the Cytoplasmic side of the membrane. In terms of domain architecture, mRNA cap 0-1 NS5-type MT spans Gly2517–Ala2781. Residues Lys2529, Leu2532, Asn2533, Met2535, Phe2540, and Lys2544 each contribute to the mRNA site. Lys2529–Met2535 is a binding site for GTP. Residue Ser2572 participates in S-adenosyl-L-methionine binding. Residue Ser2572 is modified to Phosphoserine. The active-site For 2'-O-MTase activity is the Lys2577. Residues Val2593–Leu2596 form an SUMO-interacting motif (SIM) region. Residues Gly2602, Trp2603, Thr2620, Lys2621, His2626, Glu2627, Asp2647, Val2648, Asp2662, and Ile2663 each coordinate S-adenosyl-L-methionine. Asp2662 (for 2'-O-MTase activity) is an active-site residue. Glu2665 to Glu2671 serves as a coordination point for GTP. Position 2666 (Ser2666) interacts with mRNA. Lys2698 serves as the catalytic For 2'-O-MTase activity. MRNA is bound by residues Arg2729 and Ser2731. GTP is bound at residue Arg2729–Ser2731. Residue Glu2734 is the For 2'-O-MTase activity of the active site. Tyr2736 serves as a coordination point for S-adenosyl-L-methionine. Positions Lys2904 to Val2910 match the Nuclear localization signal (NLS) motif. Residues Glu2955, His2959, Cys2964, and Cys2967 each contribute to the Zn(2+) site. The region spanning Gly3045–Ala3195 is the RdRp catalytic domain. Zn(2+) contacts are provided by His3230, Cys3246, and Cys3365.

This sequence in the N-terminal section; belongs to the class I-like SAM-binding methyltransferase superfamily. mRNA cap 0-1 NS5-type methyltransferase family. In terms of assembly, homodimer. Interacts with host SERTAD3; this interaction promotes capsid protein C degradation. Interacts with host CAPRIN1; this interaction is probably linked to the inhibition of stress granules formation by the virus. Interacts with host G3BP1; this interaction is probably linked to the inhibition of stress granules formation by the virus. Forms heterodimers with envelope protein E in the endoplasmic reticulum and Golgi. Interacts with non-structural protein 2A. As to quaternary structure, homodimer; in the endoplasmic reticulum and Golgi. Interacts with host TYRO3, AXL and DC-SIGN proteins. Interacts with non-structural protein 2A. Interacts with host HAVCR1; this interaction likely mediates virus attachment to host cell. Interacts with host NCAM1. Interacts with host HSPA5. Interacts with Aedes aegypti SRPN25, APY and venom allergen-1 salivary proteins; the interactions do not affect Zika virus replication in human endothelial cells and keratinocytes. In terms of assembly, homodimer; Homohexamer when secreted. Interacts with host TBK1. Interacts with host USP8. Interacts with envelope protein E. Interacts with host HSPA5. Interacts with the structural protein prM/E complex, and the NS2B/NS3 protease complex. As to quaternary structure, forms a heterodimer with serine protease NS3. May form homooligomers. Interacts with human SPCS1. Interacts with non-structural protein 2A. In terms of assembly, forms a heterodimer with NS2B. Interacts with NS4B. Interacts with unphosphorylated RNA-directed RNA polymerase NS5; this interaction stimulates RNA-directed RNA polymerase NS5 guanylyltransferase activity. Interacts with non-structural protein 2A. Interacts with host SHFL; this interaction promotes NS3 degradation via a lysosome-dependent pathway. Interacts with host CEP63; this interaction disorganizes the centrosome and inhibits host innate immune response. May interact with host ANKLE2; the interaction may cause defects in brain development, such as microcephaly. May interact with host SRPRA and SEC61G. As to quaternary structure, interacts with serine protease NS3. Interacts with NS1. Interacts with host TBK1. In terms of assembly, homodimer. Interacts with host STAT2; this interaction inhibits the phosphorylation of the latter, and, when all viral proteins are present (polyprotein), targets STAT2 for degradation. Interacts with host TBK1 and IKBKE; these interactions lead to the inhibition of the host RIG-I signaling pathway. Interacts with host KPNA2. Interacts with host PAF1 complex; the interaction may prevent the recruitment of the host PAF1 complex to interferon-responsive genes, and thus reduces the immune response. Interacts with serine protease NS3. Interacts with host ZSWIM8; this interaction allows STAT2 binding to ZSWIM8 and subsequent proteasomal degradation leading to inhibition of interferon signaling. In terms of processing, specific enzymatic cleavages in vivo yield mature proteins. Cleavages in the lumen of endoplasmic reticulum are performed by host signal peptidase, whereas cleavages in the cytoplasmic side are performed by serine protease NS3. Signal cleavage at the 2K-4B site requires a prior NS3 protease-mediated cleavage at the 4A-2K site. Cleaved in post-Golgi vesicles by a host furin, releasing the mature small envelope protein M, and peptide pr. This cleavage is incomplete as up to 30% of viral particles still carry uncleaved prM. Post-translationally, N-glycosylation plays a role in virulence in mammalian and mosquito hosts, but may have no effect on neurovirulence. In terms of processing, ubiquitination by host TRIM7 promotes virus attachment and fusion of the virus and the host endosome membrane. N-glycosylated. The excreted form is glycosylated, which is required for efficient secretion of the protein from infected cells. Post-translationally, acetylated by host KAT5. Acetylation modulates NS3 RNA-binding and unwinding activities and plays an important positive role for viral replication. In terms of processing, phosphorylated on serines residues. This phosphorylation may trigger NS5 nuclear localization. Sumoylated, required for regulating IFN induced interferon stimulated genes/ISGs.

The protein resides in the virion. Its subcellular location is the host nucleus. It is found in the host cytoplasm. It localises to the host perinuclear region. The protein localises to the secreted. The protein resides in the virion membrane. Its subcellular location is the host endoplasmic reticulum membrane. The catalysed reaction is Selective hydrolysis of -Xaa-Xaa-|-Yaa- bonds in which each of the Xaa can be either Arg or Lys and Yaa can be either Ser or Ala.. The enzyme catalyses RNA(n) + a ribonucleoside 5'-triphosphate = RNA(n+1) + diphosphate. It catalyses the reaction a ribonucleoside 5'-triphosphate + H2O = a ribonucleoside 5'-diphosphate + phosphate + H(+). It carries out the reaction ATP + H2O = ADP + phosphate + H(+). The catalysed reaction is a 5'-end (5'-triphosphoguanosine)-ribonucleoside in mRNA + S-adenosyl-L-methionine = a 5'-end (N(7)-methyl 5'-triphosphoguanosine)-ribonucleoside in mRNA + S-adenosyl-L-homocysteine. The enzyme catalyses a 5'-end (N(7)-methyl 5'-triphosphoguanosine)-ribonucleoside in mRNA + S-adenosyl-L-methionine = a 5'-end (N(7)-methyl 5'-triphosphoguanosine)-(2'-O-methyl-ribonucleoside) in mRNA + S-adenosyl-L-homocysteine + H(+). Functionally, plays a role in virus budding by binding to the host cell membrane and packages the viral RNA into a nucleocapsid that forms the core of the mature virus particle. During virus entry, may induce genome penetration into the host cytoplasm after hemifusion induced by the surface proteins. Can migrate to the cell nucleus where it modulates host functions. Inhibits the integrated stress response (ISR) in the infected cell. Inhibits RNA silencing by interfering with host Dicer. Its function is as follows. Prevents premature fusion activity of envelope proteins in trans-Golgi by binding to envelope protein E at pH 6.0. After virion release in extracellular space, gets dissociated from E dimers. In terms of biological role, plays a role in host immune defense modulation and protection of envelope protein E during virion synthesis. PrM-E cleavage is inefficient, many virions are only partially matured and immature prM-E proteins could play a role in immune evasion. Contributes to fetal microcephaly in humans. Acts as a chaperone for envelope protein E during intracellular virion assembly by masking and inactivating envelope protein E fusion peptide. prM is the only viral peptide matured by host furin in the trans-Golgi network probably to avoid catastrophic activation of the viral fusion activity in acidic Golgi compartment prior to virion release. Functionally, may play a role in virus budding. Exerts cytotoxic effects by activating a mitochondrial apoptotic pathway through M ectodomain. May display a viroporin activity. Binds to host cell surface receptors and mediates fusion between viral and cellular membranes. Efficient virus attachment to cell is, at least in part, mediated by host HAVCR1 in a cell-type specific manner. In addition, host NCAM1 can also be used as entry receptor. Interaction with host HSPA5 plays an important role in the early stages of infection as well. Envelope protein is synthesized in the endoplasmic reticulum and forms a heterodimer with protein prM. The heterodimer plays a role in virion budding in the ER, and the newly formed immature particle is covered with 60 spikes composed of heterodimers between precursor prM and envelope protein E. The virion is transported to the Golgi apparatus where the low pH causes the dissociation of PrM-E heterodimers and formation of E homodimers. PrM-E cleavage is inefficient, many virions are only partially matured and immature prM-E proteins could play a role in immune evasion. Its function is as follows. Plays a role in the inhibition of host RLR-induced interferon-beta activation by targeting TANK-binding kinase 1/TBK1. In addition, recruits the host deubiquitinase USP8 to cleave 'Lys-11'-linked polyubiquitin chains from caspase-1/CASP1 thus inhibiting its proteasomal degradation. In turn, stabilized CASP1 promotes cleavage of cGAS, which inhibits its ability to recognize mitochondrial DNA release and initiate type I interferon signaling. In terms of biological role, component of the viral RNA replication complex that recruits genomic RNA, the structural protein prM/E complex, and the NS2B/NS3 protease complex to the virion assembly site and orchestrates virus morphogenesis. Antagonizes also the host MDA5-mediated induction of alpha/beta interferon antiviral response. May disrupt adherens junction formation and thereby impair proliferation of radial cells in the host cortex. Functionally, required cofactor for the serine protease function of NS3. Displays three enzymatic activities: serine protease, NTPase and RNA helicase. NS3 serine protease, in association with NS2B, performs its autocleavage and cleaves the polyprotein at dibasic sites in the cytoplasm: C-prM, NS2A-NS2B, NS2B-NS3, NS3-NS4A, NS4A-2K and NS4B-NS5. NS3 RNA helicase binds RNA and unwinds dsRNA in the 3' to 5' direction. Leads to translation arrest when expressed ex vivo. Disrupts host centrosome organization in a CEP63-dependent manner to degrade host TBK1 and inhibits innate immune response. Inhibits the integrated stress response (ISR) in the infected cell. Its function is as follows. Regulates the ATPase activity of the NS3 helicase activity. NS4A allows NS3 helicase to conserve energy during unwinding. Cooperatively with NS4B suppresses the Akt-mTOR pathway and leads to cellular dysregulation. By inhibiting host ANKLE2 functions, may cause defects in brain development, such as microcephaly. Also antagonizes the host MDA5-mediated induction of alpha/beta interferon antiviral response. Inhibits the integrated stress response (ISR) in the infected cell. In terms of biological role, functions as a signal peptide for NS4B and is required for the interferon antagonism activity of the latter. Functionally, induces the formation of ER-derived membrane vesicles where the viral replication takes place. Also plays a role in the inhibition of host RLR-induced interferon-beta production at TANK-binding kinase 1/TBK1 level. Cooperatively with NS4A suppresses the Akt-mTOR pathway and leads to cellular dysregulation. Replicates the viral (+) and (-) RNA genome, and performs the capping of genomes in the cytoplasm. Methylates viral RNA cap at guanine N-7 and ribose 2'-O positions. Once sufficient NS5 is expressed, binds to the cap-proximal structure and inhibits further translation of the viral genome. Besides its role in RNA genome replication, also prevents the establishment of a cellular antiviral state by blocking the interferon-alpha/beta (IFN-alpha/beta) signaling pathway. Mechanistically, interferes with host kinases TBK1 and IKKE upstream of interferon regulatory factor 3/IRF3 to inhibit the RIG-I pathway. Also antagonizes type I interferon signaling by targeting STAT2 for degradation by the proteasome thereby preventing activation of JAK-STAT signaling pathway. Mechanistically, acts as a scaffold protein to connect host ZSWIM8/CUL3 ligase complex and STAT2, leading to STAT2 degradation. Within the host nucleus, disrupts host SUMO1 and STAT2 co-localization with PML, resulting in PML degradation. May also reduce immune responses by preventing the recruitment of the host PAF1 complex to interferon-responsive genes. The polypeptide is Genome polyprotein (Aedes aegypti (Yellowfever mosquito)).